The primary structure comprises 352 residues: Phosphoribosylformylglycinamidine cyclo-ligase (352 aa).

The protein belongs to the AIR synthase family.

It localises to the cytoplasm. The catalysed reaction is 2-formamido-N(1)-(5-O-phospho-beta-D-ribosyl)acetamidine + ATP = 5-amino-1-(5-phospho-beta-D-ribosyl)imidazole + ADP + phosphate + H(+). The protein operates within purine metabolism; IMP biosynthesis via de novo pathway; 5-amino-1-(5-phospho-D-ribosyl)imidazole from N(2)-formyl-N(1)-(5-phospho-D-ribosyl)glycinamide: step 2/2. The protein is Phosphoribosylformylglycinamidine cyclo-ligase of Pseudomonas putida (strain W619).